The primary structure comprises 342 residues: Paired box protein Pax-9 (342 aa).

The paired DNA-binding region spans 4–130; sequence AFGEVNQLGG…SSISRILRNK (127 aa). The PAI subdomain stretch occupies residues 7 to 63; that stretch reads EVNQLGGVFVNGRPLPNAIRLRIVELAQLGIRPCDISRQLRVSHGCVSKILARYNET. An RED subdomain region spans residues 82-130; that stretch reads TVVKHIRTYKQRDPGIFAWEIRDRLLADGVCDKYNVPSVSSISRILRNK. Positions 168-189 are interaction with KDM5B; the sequence is AAAAKVPTPPGVPAIPGSVALP.

In terms of assembly, interacts with KDM5B.

It is found in the nucleus. Its function is as follows. Transcription factor required for normal development of thymus, parathyroid glands, ultimobranchial bodies, teeth, skeletal elements of skull and larynx as well as distal limbs. The protein is Paired box protein Pax-9 of Rattus norvegicus (Rat).